A 497-amino-acid polypeptide reads, in one-letter code: tRNA-2-methylthio-N(6)-dimethylallyladenosine synthase (497 aa).

A disordered region spans residues 1-50 (MTGTSNIPTHGKEHKDAPALLPLPAPNPHHTHAAHPGNPSHDRPPSRGKL). An MTTase N-terminal domain is found at 48 to 165 (GKLFIKTHGC…LPDMIRARRE (118 aa)). Cys-57, Cys-94, Cys-128, Cys-202, Cys-206, and Cys-209 together coordinate [4Fe-4S] cluster. Residues 188 to 430 (RAEGPSAFVS…QKHINTYAAD (243 aa)) form the Radical SAM core domain. A TRAM domain is found at 433–496 (KRMIGTVQTV…SNSLRGRVHT (64 aa)).

The protein belongs to the methylthiotransferase family. MiaB subfamily. Monomer. Requires [4Fe-4S] cluster as cofactor.

It is found in the cytoplasm. The catalysed reaction is N(6)-dimethylallyladenosine(37) in tRNA + (sulfur carrier)-SH + AH2 + 2 S-adenosyl-L-methionine = 2-methylsulfanyl-N(6)-dimethylallyladenosine(37) in tRNA + (sulfur carrier)-H + 5'-deoxyadenosine + L-methionine + A + S-adenosyl-L-homocysteine + 2 H(+). In terms of biological role, catalyzes the methylthiolation of N6-(dimethylallyl)adenosine (i(6)A), leading to the formation of 2-methylthio-N6-(dimethylallyl)adenosine (ms(2)i(6)A) at position 37 in tRNAs that read codons beginning with uridine. This chain is tRNA-2-methylthio-N(6)-dimethylallyladenosine synthase, found in Xylella fastidiosa (strain 9a5c).